Reading from the N-terminus, the 258-residue chain is Cytochrome b-c1 complex subunit Rieske-1, mitochondrial (258 aa).

The transit peptide at 1–46 (WPVRSAAPSSSAFISANHFSSDDDSSSPRSISPSLASVFLHHTRGF) directs the protein to the mitochondrion. Over 47–95 (SSNSVSPAHDMGLVPDLPPTVAAIKNPTSKIVYDEHNHERYPPGDPSKR) the chain is Mitochondrial matrix. The chain crosses the membrane as a helical span at residues 96–118 (AFAYFVLTGGRFVYASLMRLLIL). Residues 119–258 (KFVLSMSASK…FLEENKLLIG (140 aa)) are Mitochondrial intermembrane-facing. Residues 161–256 (RRRTEDDISL…YSFLEENKLL (96 aa)) form the Rieske domain. [2Fe-2S] cluster is bound by residues cysteine 201, histidine 203, cysteine 220, and histidine 223. Cysteines 206 and 222 form a disulfide.

The protein belongs to the Rieske iron-sulfur protein family. As to quaternary structure, component of the ubiquinol-cytochrome c oxidoreductase (cytochrome b-c1 complex, complex III, CIII), a multisubunit enzyme composed of 3 respiratory subunits cytochrome b, cytochrome c1 and Rieske protein, 2 core protein subunits, and several low-molecular weight protein subunits. The complex exists as an obligatory dimer and forms supercomplexes (SCs) in the inner mitochondrial membrane with cytochrome c oxidase (complex IV, CIV). [2Fe-2S] cluster is required as a cofactor.

The protein resides in the mitochondrion inner membrane. It carries out the reaction a quinol + 2 Fe(III)-[cytochrome c](out) = a quinone + 2 Fe(II)-[cytochrome c](out) + 2 H(+)(out). Its function is as follows. Component of the ubiquinol-cytochrome c oxidoreductase, a multisubunit transmembrane complex that is part of the mitochondrial electron transport chain which drives oxidative phosphorylation. The respiratory chain contains 3 multisubunit complexes succinate dehydrogenase (complex II, CII), ubiquinol-cytochrome c oxidoreductase (cytochrome b-c1 complex, complex III, CIII) and cytochrome c oxidase (complex IV, CIV), that cooperate to transfer electrons derived from NADH and succinate to molecular oxygen, creating an electrochemical gradient over the inner membrane that drives transmembrane transport and the ATP synthase. The cytochrome b-c1 complex catalyzes electron transfer from ubiquinol to cytochrome c, linking this redox reaction to translocation of protons across the mitochondrial inner membrane, with protons being carried across the membrane as hydrogens on the quinol. In the process called Q cycle, 2 protons are consumed from the matrix, 4 protons are released into the intermembrane space and 2 electrons are passed to cytochrome c. The Rieske protein is a catalytic core subunit containing a [2Fe-2S] iron-sulfur cluster. It cycles between 2 conformational states during catalysis to transfer electrons from the quinol bound in the Q(0) site in cytochrome b to cytochrome c1. In Nicotiana tabacum (Common tobacco), this protein is Cytochrome b-c1 complex subunit Rieske-1, mitochondrial.